A 284-amino-acid chain; its full sequence is uncharacterized protein (284 aa).

The region spanning 25-123 (PILVMHGGHS…NTLTLQSAVT (99 aa)) is the AB hydrolase-1 domain. Ser-96 is an active-site residue.

It belongs to the AB hydrolase superfamily.

This is an uncharacterized protein from Bacillus subtilis (strain 168).